Reading from the N-terminus, the 416-residue chain is Choline/ethanolaminephosphotransferase 1 (416 aa).

A disordered region spans residues 1 to 20 (MSGHRSTRKRCGDSHPESPV). Serine 18 is modified (phosphoserine). The residue at position 40 (threonine 40) is a Phosphothreonine. Asparagine 86 is a binding site for CDP-choline. 2 helical membrane-spanning segments follow: residues 89 to 108 (TIIG…FYCP) and 116 to 133 (LWAY…QSLD). Aspartate 133 serves as a coordination point for Mg(2+). N-linked (GlcNAc...) asparagine glycosylation is present at asparagine 144. Glutamate 151 is a binding site for CDP-choline. Aspartate 154 serves as a coordination point for Mg(2+). Catalysis depends on histidine 155, which acts as the Proton acceptor. The next 8 helical transmembrane spans lie at 156–176 (GCDS…VQLG), 180–199 (DWMF…AHWQ), 210–230 (IIDV…AVIG), 246–267 (MKIF…NYFR), 286–306 (VLSP…IYKK), 315–334 (HPCL…TNKL), 349–363 (TAFI…DQYF), and 368–388 (DEYI…IRYC). A Mg(2+)-binding site is contributed by aspartate 158.

Belongs to the CDP-alcohol phosphatidyltransferase class-I family. In terms of assembly, homodimer. Mg(2+) serves as cofactor. It depends on Mn(2+) as a cofactor. Ubiquitously expressed.

It is found in the endoplasmic reticulum membrane. The protein localises to the nucleus membrane. The enzyme catalyses CDP-ethanolamine + a 1,2-diacyl-sn-glycerol = a 1,2-diacyl-sn-glycero-3-phosphoethanolamine + CMP + H(+). It catalyses the reaction CDP-choline + a 1,2-diacyl-sn-glycerol = a 1,2-diacyl-sn-glycero-3-phosphocholine + CMP + H(+). It carries out the reaction 1-O-alkyl-2-acyl-sn-glycerol + CDP-choline = a 1-O-alkyl-2-acyl-sn-glycero-3-phosphocholine + CMP + H(+). The catalysed reaction is a 1-O-(1Z-alkenyl)-2-acyl-sn-glycerol + CDP-choline = a 1-O-(1Z-alkenyl)-2-acyl-sn-glycero-3-phosphocholine + CMP + H(+). The enzyme catalyses 1,2-dioctanoyl-sn-glycerol + CDP-choline = 1,2-dioctanoyl-sn-glycero-3-phosphocholine + CMP + H(+). It catalyses the reaction 1,2-didecanoyl-sn-glycerol + CDP-choline = 1,2-didecanoyl-sn-glycero-3-phosphocholine + CMP + H(+). It carries out the reaction CDP-choline + 1,2-di-(9Z-octadecenoyl)-sn-glycerol = 1,2-di-(9Z-octadecenoyl)-sn-glycero-3-phosphocholine + CMP + H(+). The catalysed reaction is 1-hexadecanoyl-2-(9Z-octadecenoyl)-sn-glycerol + CDP-choline = 1-hexadecanoyl-2-(9Z-octadecenoyl)-sn-glycero-3-phosphocholine + CMP + H(+). The enzyme catalyses CDP-ethanolamine + 1,2-di-(9Z-octadecenoyl)-sn-glycerol = 1,2-di-(9Z-octadecenoyl)-sn-glycero-3-phosphoethanolamine + CMP + H(+). It catalyses the reaction 1-hexadecanoyl-2-(9Z-octadecenoyl)-sn-glycerol + CDP-ethanolamine = 1-hexadecanoyl-2-(9Z-octadecenoyl)-sn-glycero-3-phosphoethanolamine + CMP + H(+). It carries out the reaction 1-hexadecanoyl-2-(4Z,7Z,10Z,13Z,16Z,19Z-docosahexaenoyl)-sn-glycerol + CDP-choline = 1-hexadecanoyl-2-(4Z,7Z,10Z,13Z,16Z,19Z-docosahexaenoyl)-sn-glycero-3-phosphocholine + CMP + H(+). The catalysed reaction is 1,2-di-(9Z-hexadecenoyl)-sn-glycerol + CDP-choline = 1,2-di-(9Z-hexadecenoyl)-sn-glycero-3-phosphocholine + CMP + H(+). The enzyme catalyses 1,2-di-(9Z-hexadecenoyl)-sn-glycerol + CDP-ethanolamine = 1,2-di-(9Z-hexadecenoyl)-sn-glycero-3-phosphoethanolamine + CMP + H(+). It catalyses the reaction 1-O-hexadecyl-2-acetyl-sn-glycerol + CDP-choline = 1-O-hexadecyl-2-acetyl-sn-glycero-3-phosphocholine + CMP + H(+). It carries out the reaction 1-O-hexadecyl-2-(5Z,8Z,11Z,14Z-eicosatetraenoyl)-sn-glycerol + CDP-choline = 1-O-hexadecyl-2-(5Z,8Z,11Z,14Z)-eicosatetraenoyl-sn-glycero-3-phosphocholine + CMP + H(+). Its pathway is phospholipid metabolism; phosphatidylethanolamine biosynthesis; phosphatidylethanolamine from ethanolamine: step 3/3. It participates in phospholipid metabolism; phosphatidylcholine biosynthesis; phosphatidylcholine from phosphocholine: step 2/2. In terms of biological role, catalyzes both phosphatidylcholine and phosphatidylethanolamine biosynthesis from CDP-choline and CDP-ethanolamine, respectively. Involved in protein-dependent process of phospholipid transport to distribute phosphatidyl choline to the lumenal surface. Has a higher cholinephosphotransferase activity than ethanolaminephosphotransferase activity. This chain is Choline/ethanolaminephosphotransferase 1, found in Homo sapiens (Human).